Reading from the N-terminus, the 370-residue chain is Protein-tyrosine sulfotransferase 1 (370 aa).

The Cytoplasmic segment spans residues 1 to 8 (MVGKLKQN). The chain crosses the membrane as a helical; Signal-anchor for type II membrane protein span at residues 9 to 25 (LLLACLVISSVTVFYLG). Residues 26–370 (QHAMECHHRI…KEKPQTEQVE (345 aa)) lie on the Lumenal side of the membrane. A glycan (N-linked (GlcNAc...) asparagine) is linked at asparagine 60. 79-83 (RSGTT) serves as a coordination point for 3'-phosphoadenylyl sulfate. Cysteine 97 and cysteine 157 are disulfide-bonded. Glutamate 100 serves as the catalytic Proton donor/acceptor. The interval 102–106 (RVIPR) is interaction with peptide substrate. Positions 184, 192, and 196 each coordinate 3'-phosphoadenylyl sulfate. Cysteine 226 and cysteine 234 are joined by a disulfide. Tyrosine 239 contacts 3'-phosphoadenylyl sulfate. Asparagine 262 is a glycosylation site (N-linked (GlcNAc...) asparagine). 3'-phosphoadenylyl sulfate-binding positions include 286 to 295 (STDQVIKPVN) and lysine 301.

This sequence belongs to the protein sulfotransferase family. In terms of assembly, homodimer. Can also form heterodimers with TPST2. Post-translationally, N-glycosylated. As to expression, ubiquitous. Detected in heart, brain, lung, liver, spleen, kidney, skeletal muscle and testis.

It is found in the golgi apparatus membrane. It carries out the reaction L-tyrosyl-[protein] + 3'-phosphoadenylyl sulfate = O-sulfo-L-tyrosine-[protein] + adenosine 3',5'-bisphosphate + H(+). In terms of biological role, catalyzes the O-sulfation of tyrosine residues within acidic motifs of polypeptides, using 3'-phosphoadenylyl sulfate (PAPS) as cosubstrate. The protein is Protein-tyrosine sulfotransferase 1 (Tpst1) of Mus musculus (Mouse).